The sequence spans 341 residues: Type II restriction enzyme BgcI specificity subunit S.BcgI (341 aa).

Belongs to the type-I restriction system S methylase family. As to quaternary structure, heterotrimer of two A and one B subunit. Both subunits are necessary for DNA-binding, which is sequence non-specific. Mg(2+) serves as cofactor.

The enzyme catalyses Endonucleolytic cleavage of DNA to give specific double-stranded fragments with terminal 5'-phosphates.. With respect to regulation, DNA restriction requires S-adenosyl-L-methionine and Mg(2+), and is inhibited by S-adenosyl-homocysteine. SAM may be a cofactor for DNA restriction. Functionally, the specificity subunit. A B, G, H and S subtype restriction enzyme that recognizes the double-stranded sequence 5'-CGAN(6)TGC-3' and cleaves bilaterally and symmetrically 10 base pairs upstream and 12 base pairs downstream of the sequence to release a 34-base pair fragment. Methylation of the recognition sequence occurs on the adenine in either one or both strands; seems to methylate restricted DNA. This subunit degrades DNA in a non-specific manner. The chain is Type II restriction enzyme BgcI specificity subunit S.BcgI from Heyndrickxia coagulans (Weizmannia coagulans).